The chain runs to 223 residues: Ribonuclease 3 (223 aa).

The 123-residue stretch at 3 to 125 folds into the RNase III domain; that stretch reads LEKLQKKLGH…LIAAIYLDAG (123 aa). E38 serves as a coordination point for Mg(2+). D42 is a catalytic residue. Residues D111 and E114 each contribute to the Mg(2+) site. Residue E114 is part of the active site. The 71-residue stretch at 152–222 folds into the DRBM domain; the sequence is DPKTRLQEFL…AQQAIEKLKI (71 aa).

Belongs to the ribonuclease III family. In terms of assembly, homodimer. Mg(2+) is required as a cofactor.

It localises to the cytoplasm. The catalysed reaction is Endonucleolytic cleavage to 5'-phosphomonoester.. Digests double-stranded RNA. Involved in the processing of primary rRNA transcript to yield the immediate precursors to the large and small rRNAs (23S and 16S). Processes some mRNAs, and tRNAs when they are encoded in the rRNA operon. Processes pre-crRNA and tracrRNA of type II CRISPR loci if present in the organism. This Histophilus somni (strain 2336) (Haemophilus somnus) protein is Ribonuclease 3.